Consider the following 181-residue polypeptide: Protein Syd (181 aa).

This sequence belongs to the Syd family.

It is found in the cell inner membrane. Its function is as follows. Interacts with the SecY protein in vivo. May bind preferentially to an uncomplexed state of SecY, thus functioning either as a chelating agent for excess SecY in the cell or as a regulatory factor that negatively controls the translocase function. This chain is Protein Syd, found in Escherichia coli O81 (strain ED1a).